A 164-amino-acid chain; its full sequence is Transcription elongation factor GreA (164 aa).

A coiled-coil region spans residues 50–75; that stretch reads YHAAREEQGQQEARIRQLQDLLNIAK.

It belongs to the GreA/GreB family.

Its function is as follows. Necessary for efficient RNA polymerase transcription elongation past template-encoded arresting sites. The arresting sites in DNA have the property of trapping a certain fraction of elongating RNA polymerases that pass through, resulting in locked ternary complexes. Cleavage of the nascent transcript by cleavage factors such as GreA or GreB allows the resumption of elongation from the new 3'terminus. GreA releases sequences of 2 to 3 nucleotides. This is Transcription elongation factor GreA from Mycobacterium leprae (strain Br4923).